The following is a 345-amino-acid chain: Protein RecA (345 aa).

An ATP-binding site is contributed by Gly65 to Thr72. Positions Glu326–Glu336 are enriched in basic and acidic residues. The disordered stretch occupies residues Glu326–Glu345.

It belongs to the RecA family.

The protein localises to the cytoplasm. Functionally, can catalyze the hydrolysis of ATP in the presence of single-stranded DNA, the ATP-dependent uptake of single-stranded DNA by duplex DNA, and the ATP-dependent hybridization of homologous single-stranded DNAs. It interacts with LexA causing its activation and leading to its autocatalytic cleavage. This is Protein RecA from Stenotrophomonas maltophilia (strain K279a).